Reading from the N-terminus, the 191-residue chain is Small ribosomal subunit protein eS7 (191 aa).

Position 1 is an N-acetylmethionine (Met-1).

It belongs to the eukaryotic ribosomal protein eS7 family.

This chain is Small ribosomal subunit protein eS7 (RPS7), found in Brassica oleracea (Wild cabbage).